The chain runs to 21 residues: Protein IroK (21 aa).

Functionally, possible increased expression of this protein (due to mutations upstream of the start codon) is proposed to be responsible for resistance to 3-hydroxypropionic acid (3-HP). In Escherichia coli (strain K12), this protein is Protein IroK (iroK).